The primary structure comprises 155 residues: MSYGLDSGDVLEAEDPFIILLVEDNNAHAMLIMRAFERLGFTGRIEWLRDGKAALDYLRLHEGGGRSLPRMVLLDLRLPKVDGHEVLSQIKRSERLRAIPVVVLTTSTSDDDLRRAYSNHVNSYLIKPLSFEDLKRTVEEIKEYWLGWNRSPGPA.

The Response regulatory domain maps to 18 to 142 (IILLVEDNNA…DLKRTVEEIK (125 aa)). D75 is modified (4-aspartylphosphate).

Phosphorylated by FilI.

Member of the two-component regulatory system FilI/FilRs, which is involved in the regulation of methanogenesis. The protein is Probable methanogenesis regulatory protein FilR2 of Methanothrix harundinacea (strain 6Ac) (Methanosaeta harundinacea).